Reading from the N-terminus, the 1172-residue chain is Tudor domain-containing protein 1 (1172 aa).

Disordered regions lie at residues 1-59 and 72-136; these read MMPR…KNNF and QEDS…KKSH. Low complexity-rich tracts occupy residues 75-86 and 103-117; these read SSVVSSNPAVVN and NPVS…SPPN. Over residues 118–129 the composition is skewed to polar residues; it reads QVKTKPSSNVTP. C163, C166, C174, C177, C183, C187, H195, and C199 together coordinate Zn(2+). The segment at 163 to 199 adopts an MYND-type zinc-finger fold; that stretch reads CHRCGLFGSLRCSQCKQTYYCSTACQRRDWSSHSTIC. Tudor domains follow at residues 307 to 367, 536 to 595, 756 to 815, and 982 to 1040; these read LPVK…LDLF, YPTI…LLDL, KAEI…FLLL, and RPRT…HLEL.

It belongs to the TDRD1 family. Found in a mRNP complex, at least composed of TDRD1, TDRD6, TDRD7 and DDX4. Interacts with MAEL. Interacts with PIWIL1, PIWIL2 and PIWIL4 (when methylated on arginine residues). Interacts with TDRD12. Testis and ovary specific. Present in germ-line cells and is most abundant in fetal prospermatogonia and postnatal primary spermatocytes (at protein level).

The protein localises to the cytoplasm. Functionally, plays a central role during spermatogenesis by participating in the repression transposable elements and preventing their mobilization, which is essential for the germline integrity. Acts via the piRNA metabolic process, which mediates the repression of transposable elements during meiosis by forming complexes composed of piRNAs and Piwi proteins and governs the methylation and subsequent repression of transposons. Required for the localization of Piwi proteins to the meiotic nuage. Involved in the piRNA metabolic process by ensuring the entry of correct transcripts into the normal piRNA pool and limiting the entry of cellular transcripts into the piRNA pathway. May act by allowing the recruitment of piRNA biogenesis or loading factors that ensure the correct entry of transcripts and piRNAs into Piwi proteins. This is Tudor domain-containing protein 1 (Tdrd1) from Mus musculus (Mouse).